A 1938-amino-acid chain; its full sequence is Autophagy-related protein 2 homolog A (1938 aa).

One can recognise a Chorein N-terminal domain in the interval 14–111 (ERVCRYLLHH…QLTLQPRRGP (98 aa)). Phosphoserine occurs at positions 765, 878, 892, 894, 1266, 1301, and 1309. A disordered region spans residues 1242-1272 (DLHPPPRPPSPTEIAGQKLSESPASLPSCPP). The tract at residues 1315–1359 (LFPGERSGAPPPSPPVGGPAGSLGSCSEEKEDEREEEGDGDTLDS) is disordered. Residues 1343 to 1359 (EKEDEREEEGDGDTLDS) show a composition bias toward acidic residues. The tract at residues 1358 to 1404 (DSDEFCILDAPGLGIPPRDGEPVVTQLHPGPIVVRDGYFSRPIGSTD) is WIPI-interacting. Ser-1402 bears the Phosphoserine mark. Disordered stretches follow at residues 1438 to 1476 (PHPG…GSGR) and 1614 to 1657 (GETS…PSPP). Residues 1446-1464 (TGLSGPRSSPSRCSGPNRP) show a composition bias toward low complexity.

This sequence belongs to the ATG2 family. As to quaternary structure, interacts with ATG9A (via C-terminus). Interacts (via WIPI-interacting region) with WDR45B/WIPI3. Interacts (via WIPI-interacting region) with WDR45/WIPI4. Interacts with TMEM41B. Interacts with VMP1.

The protein resides in the preautophagosomal structure membrane. It is found in the lipid droplet. It localises to the endoplasmic reticulum membrane. It carries out the reaction a 1,2-diacyl-sn-glycero-3-phospho-L-serine(in) = a 1,2-diacyl-sn-glycero-3-phospho-L-serine(out). The catalysed reaction is a 1,2-diacyl-sn-glycero-3-phosphoethanolamine(in) = a 1,2-diacyl-sn-glycero-3-phosphoethanolamine(out). Its function is as follows. Lipid transfer protein involved in autophagosome assembly. Tethers the edge of the isolation membrane (IM) to the endoplasmic reticulum (ER) and mediates direct lipid transfer from ER to IM for IM expansion. Binds to the ER exit site (ERES), which is the membrane source for autophagosome formation, and extracts phospholipids from the membrane source and transfers them to ATG9 (ATG9A or ATG9B) to the IM for membrane expansion. Lipid transfer activity is enhanced by WIPI1 and WDR45/WIPI4, which promote ATG2A-association with phosphatidylinositol 3-monophosphate (PI3P)-containing membranes. Also regulates lipid droplets morphology and distribution within the cell. This chain is Autophagy-related protein 2 homolog A, found in Homo sapiens (Human).